The primary structure comprises 148 residues: Globin-3 (148 aa).

The Globin domain maps to 2–148 (TLTKHEQDIL…HVFPMMAAEI (147 aa)). His99 contributes to the heme binding site.

Belongs to the globin family. In terms of assembly, monomer.

Oxygen binding protein. This chain is Globin-3, found in Paramphistomum epiclitum.